Consider the following 147-residue polypeptide: uncharacterized protein (147 aa).

This is an uncharacterized protein from Archaeoglobus fulgidus (strain ATCC 49558 / DSM 4304 / JCM 9628 / NBRC 100126 / VC-16).